The following is a 162-amino-acid chain: NADH-quinone oxidoreductase subunit I (162 aa).

4Fe-4S ferredoxin-type domains follow at residues Leu53–Glu83 and Thr93–Ile122. [4Fe-4S] cluster is bound by residues Cys63, Cys66, Cys69, Cys73, Cys102, Cys105, Cys108, and Cys112.

It belongs to the complex I 23 kDa subunit family. NDH-1 is composed of 14 different subunits. Subunits NuoA, H, J, K, L, M, N constitute the membrane sector of the complex. The cofactor is [4Fe-4S] cluster.

The protein resides in the cell inner membrane. The enzyme catalyses a quinone + NADH + 5 H(+)(in) = a quinol + NAD(+) + 4 H(+)(out). Functionally, NDH-1 shuttles electrons from NADH, via FMN and iron-sulfur (Fe-S) centers, to quinones in the respiratory chain. The immediate electron acceptor for the enzyme in this species is believed to be ubiquinone. Couples the redox reaction to proton translocation (for every two electrons transferred, four hydrogen ions are translocated across the cytoplasmic membrane), and thus conserves the redox energy in a proton gradient. In Thiobacillus denitrificans (strain ATCC 25259 / T1), this protein is NADH-quinone oxidoreductase subunit I.